Consider the following 626-residue polypeptide: Chaperone protein HtpG (626 aa).

An a; substrate-binding region spans residues 1–332; that stretch reads MTNNDTPGMR…TEDLPLNVSR (332 aa). Positions 333–546 are b; that stretch reads EVVQSSKVMA…KDSLDSSMEK (214 aa). A c region spans residues 547 to 626; it reads MMKMMHAEMP…ELIEAATMSR (80 aa).

It belongs to the heat shock protein 90 family. In terms of assembly, homodimer.

The protein localises to the cytoplasm. In terms of biological role, molecular chaperone. Has ATPase activity. In Chlorobium phaeobacteroides (strain DSM 266 / SMG 266 / 2430), this protein is Chaperone protein HtpG.